A 104-amino-acid polypeptide reads, in one-letter code: Pyrimidine/purine nucleoside phosphorylase (104 aa).

Belongs to the nucleoside phosphorylase PpnP family.

The catalysed reaction is a purine D-ribonucleoside + phosphate = a purine nucleobase + alpha-D-ribose 1-phosphate. The enzyme catalyses adenosine + phosphate = alpha-D-ribose 1-phosphate + adenine. It carries out the reaction cytidine + phosphate = cytosine + alpha-D-ribose 1-phosphate. It catalyses the reaction guanosine + phosphate = alpha-D-ribose 1-phosphate + guanine. The catalysed reaction is inosine + phosphate = alpha-D-ribose 1-phosphate + hypoxanthine. The enzyme catalyses thymidine + phosphate = 2-deoxy-alpha-D-ribose 1-phosphate + thymine. It carries out the reaction uridine + phosphate = alpha-D-ribose 1-phosphate + uracil. It catalyses the reaction xanthosine + phosphate = alpha-D-ribose 1-phosphate + xanthine. Catalyzes the phosphorolysis of diverse nucleosides, yielding D-ribose 1-phosphate and the respective free bases. Can use uridine, adenosine, guanosine, cytidine, thymidine, inosine and xanthosine as substrates. Also catalyzes the reverse reactions. The protein is Pyrimidine/purine nucleoside phosphorylase of Syntrophotalea carbinolica (strain DSM 2380 / NBRC 103641 / GraBd1) (Pelobacter carbinolicus).